The sequence spans 158 residues: HVA22-like protein f (158 aa).

The next 3 membrane-spanning stretches (helical) occupy residues 2–22 (GFIIAIAKRFDALVGPGVMLL), 41–61 (QQWLTYWIIYSLITIFELSVW), and 63–83 (VLAWLPFWPYLKLLFCMWLVL).

It belongs to the DP1 family.

It is found in the membrane. The sequence is that of HVA22-like protein f (HVA22F) from Arabidopsis thaliana (Mouse-ear cress).